Reading from the N-terminus, the 305-residue chain is Tyrosine recombinase XerC (305 aa).

The Core-binding (CB) domain occupies 2 to 88; that stretch reads NQLELYIDTF…TLRSFYRFLE (87 aa). The Tyr recombinase domain occupies 109–294; sequence PVPGFLYQEE…TKDHLREAYM (186 aa). Active-site residues include Arg-149, Lys-173, His-246, Arg-249, and His-272. Catalysis depends on Tyr-281, which acts as the O-(3'-phospho-DNA)-tyrosine intermediate.

Belongs to the 'phage' integrase family. XerC subfamily. In terms of assembly, forms a cyclic heterotetrameric complex composed of two molecules of XerC and two molecules of XerD.

The protein resides in the cytoplasm. Site-specific tyrosine recombinase, which acts by catalyzing the cutting and rejoining of the recombining DNA molecules. The XerC-XerD complex is essential to convert dimers of the bacterial chromosome into monomers to permit their segregation at cell division. It also contributes to the segregational stability of plasmids. This is Tyrosine recombinase XerC from Oceanobacillus iheyensis (strain DSM 14371 / CIP 107618 / JCM 11309 / KCTC 3954 / HTE831).